Consider the following 484-residue polypeptide: Phosphatidylinositol N-acetylglucosaminyltransferase subunit A (484 aa).

Over 1 to 421 (MACRGGAGNG…RLDRLISHCG (421 aa)) the chain is Cytoplasmic. A phosphoserine mark is found at S21 and S24. The chain crosses the membrane as a helical span at residues 422 to 442 (PVTGYIFALLAVFNFLFLIFL). The Lumenal segment spans residues 443 to 484 (RWMTPDSIIDVAIDATGPRGAWTNNYSHSKRGGENNEISETR). N-linked (GlcNAc...) asparagine glycosylation occurs at N467.

The protein belongs to the glycosyltransferase group 1 family. Glycosyltransferase 4 subfamily. As to quaternary structure, component of the glycosylphosphatidylinositol-N-acetylglucosaminyltransferase (GPI-GnT) complex composed at least by PIGA, PIGC, PIGH, PIGP, PIGQ, PIGY and DPM2. Interacts with PIGC, PIGH, PIGP, PIGQ and DPM2. Interacts directly with PIGY; this interaction regulates glycosylphosphatidylinositol-N-acetylglucosaminyltransferase activity. Interacts with PIGQ.

It is found in the endoplasmic reticulum membrane. It carries out the reaction a 1,2-diacyl-sn-glycero-3-phospho-(1D-myo-inositol) + UDP-N-acetyl-alpha-D-glucosamine = a 6-(N-acetyl-alpha-D-glucosaminyl)-1-(1,2-diacyl-sn-glycero-3-phospho)-1D-myo-inositol + UDP + H(+). It functions in the pathway glycolipid biosynthesis; glycosylphosphatidylinositol-anchor biosynthesis. Catalytic subunit of the glycosylphosphatidylinositol-N-acetylglucosaminyltransferase (GPI-GnT) complex that catalyzes the transfer of N-acetylglucosamine from UDP-N-acetylglucosamine to phosphatidylinositol and participates in the first step of GPI biosynthesis. In Homo sapiens (Human), this protein is Phosphatidylinositol N-acetylglucosaminyltransferase subunit A.